The following is a 584-amino-acid chain: Transcriptional regulator STP2 (584 aa).

Polar residues-rich tracts occupy residues 1-11 (MSVAITSNNNK) and 180-202 (AESNESNESLAKDSSTTPASISD). Disordered regions lie at residues 1 to 22 (MSVAITSNNNKQPQPQPQPHLK) and 161 to 214 (KMHP…STVS). Residues 203–214 (SPSHSETESTVS) are compositionally biased toward low complexity. A C2H2-type zinc finger spans residues 225–247 (FKCPSCDAEFRVRGYLTRHMKKH). 2 disordered regions span residues 381–496 (RQKK…PQQP) and 553–584 (QYQPGQQQQQQQQQQQQQQQRQHQQQQPSMYF). Low complexity predominate over residues 394 to 407 (SESSIQSQESESSI). Positions 431 to 441 (QHQHQHHHHVQ) are enriched in basic residues. The segment covering 442-480 (NQHQQHVNQQQSIATPASIYSSSASSTSSYESTHSPYTP) has biased composition (low complexity). The span at 481–496 (QSSRSPLSHMYNPQQP) shows a compositional bias: polar residues.

Post-translationally, proteolytically cleaved: activated by the amino acid-induced proteolytic removal of an N-terminal inhibitory domain.

Its subcellular location is the cell membrane. The protein resides in the nucleus. In terms of biological role, transcription factor involved in the regulation of gene expression in response to extracellular amino acid levels. Synthesized as latent cytoplasmic precursor, which, upon a signal initiated by the plasma membrane SPS amino acid sensor system (including CSY1 and CSH3), becomes proteolytically activated and relocates to the nucleus, where it induces the expression of SPS-sensor-regulated genes. Required for efficient alkalinization through the release of ammonia from the cells produced during the breakdown of amino acids, and subsequent switch to the hyphal form. This chain is Transcriptional regulator STP2 (STP2), found in Candida albicans (strain SC5314 / ATCC MYA-2876) (Yeast).